Reading from the N-terminus, the 151-residue chain is Caveolin-3 (151 aa).

The Cytoplasmic segment spans residues 1–83 (MMAEEHTDLE…RLLSTLLGVP (83 aa)). Lysine 38 is covalently cross-linked (Glycyl lysine isopeptide (Lys-Gly) (interchain with G-Cter in SUMO3)). The tract at residues 64–114 (TFTVSKYWCYRLLSTLLGVPLALLWGFLFACISFCHIWAVVPCIKSYLIEI) is required for interaction with DAG1. Positions 84 to 104 (LALLWGFLFACISFCHIWAVV) form an intramembrane region, helical. Over 105 to 151 (PCIKSYLIEIQCISHIYSLCIRTFCNPLFAALGQVCSNIKVMLRKEV) the chain is Cytoplasmic.

Belongs to the caveolin family. As to quaternary structure, homooligomer. Interacts with DYSF. Interacts with DLG1 and KCNA5; forms a ternary complex. Interacts with DAG1 (via its C-terminal); the interaction prevents binding of DAG1 with DMD. Interacts with TRIM72. Interacts with MUSK; may regulate MUSK signaling. Interacts with POPDC1. Interacts with CAVIN1, CAVIN2 and CAVIN4. In terms of processing, sumoylation with SUMO3 by PIAS4 may reduce agonist-induced internalization and desensitization of adrenergic receptor ABRD2.

It is found in the golgi apparatus membrane. Its subcellular location is the cell membrane. The protein resides in the membrane. It localises to the caveola. The protein localises to the sarcolemma. In terms of biological role, may act as a scaffolding protein within caveolar membranes. Interacts directly with G-protein alpha subunits and can functionally regulate their activity. May also regulate voltage-gated potassium channels. Plays a role in the sarcolemma repair mechanism of both skeletal muscle and cardiomyocytes that permits rapid resealing of membranes disrupted by mechanical stress. Mediates the recruitment of CAVIN2 and CAVIN3 proteins to the caveolae. The polypeptide is Caveolin-3 (CAV3) (Bos taurus (Bovine)).